A 487-amino-acid polypeptide reads, in one-letter code: Kynureninase 1 (487 aa).

Residues Leu-147, Thr-148, 175-178, Ser-232, Asp-261, His-264, and Tyr-286 each bind pyridoxal 5'-phosphate; that span reads FPSD. Lys-287 carries the N6-(pyridoxal phosphate)lysine modification. 2 residues coordinate pyridoxal 5'-phosphate: Trp-327 and Asn-355.

This sequence belongs to the kynureninase family. In terms of assembly, homodimer. The cofactor is pyridoxal 5'-phosphate.

It is found in the cytoplasm. The enzyme catalyses L-kynurenine + H2O = anthranilate + L-alanine + H(+). It catalyses the reaction 3-hydroxy-L-kynurenine + H2O = 3-hydroxyanthranilate + L-alanine + H(+). The protein operates within amino-acid degradation; L-kynurenine degradation; L-alanine and anthranilate from L-kynurenine: step 1/1. Its pathway is cofactor biosynthesis; NAD(+) biosynthesis; quinolinate from L-kynurenine: step 2/3. Its function is as follows. Catalyzes the cleavage of L-kynurenine (L-Kyn) and L-3-hydroxykynurenine (L-3OHKyn) into anthranilic acid (AA) and 3-hydroxyanthranilic acid (3-OHAA), respectively. In Aspergillus oryzae (strain ATCC 42149 / RIB 40) (Yellow koji mold), this protein is Kynureninase 1 (bna5-1).